Reading from the N-terminus, the 211-residue chain is RILP-like protein 2 (211 aa).

Residues M1 to S32 are disordered. Over residues E8 to D21 the composition is skewed to acidic residues. Positions G24–Q106 constitute an RH1 domain. The stretch at R70–S164 forms a coiled coil. Residue S107 is modified to Phosphoserine. The RH2 domain maps to R130–K201. Residues L166–G190 are disordered.

The protein belongs to the RILPL family. Homodimer. Interacts with RAC1. Interacts (via N-terminus) with MYO5A, the interaction is required for its role in dendrite formation. Interacts with RAB8A; interaction is dependent on the phosphorylation of RAB8A on 'Thr-72'. Interacts with RAB10 and RAB12; interaction is dependent on the phosphorylation of 'Thr-73' on RAB10 and 'Ser-105' on RAB12. Widely expressed. Expressed at higher level in lung.

It is found in the cytoplasm. The protein localises to the cytosol. It localises to the cytoskeleton. Its subcellular location is the microtubule organizing center. The protein resides in the centrosome. It is found in the cell projection. The protein localises to the cilium. Involved in cell shape and neuronal morphogenesis, positively regulating the establishment and maintenance of dendritic spines. Plays a role in cellular protein transport, including protein transport away from primary cilia. May function via activation of RAC1 and PAK1. This chain is RILP-like protein 2 (RILPL2), found in Homo sapiens (Human).